The following is a 481-amino-acid chain: UDP-N-acetylmuramoyl-L-alanyl-D-glutamate--L-lysine ligase (481 aa).

Ser42 contributes to the UDP-N-acetyl-alpha-D-muramoyl-L-alanyl-D-glutamate binding site. 118–124 (GTKGKTT) provides a ligand contact to ATP. Residues Gln158, 160–161 (TT), Ser187, and Arg195 contribute to the UDP-N-acetyl-alpha-D-muramoyl-L-alanyl-D-glutamate site. Lys229 is subject to N6-carboxylysine. An L-lysine recognition motif motif is present at residues 404 to 407 (DDPN).

It belongs to the MurCDEF family. MurE subfamily. Carboxylation is probably crucial for Mg(2+) binding and, consequently, for the gamma-phosphate positioning of ATP.

Its subcellular location is the cytoplasm. It catalyses the reaction UDP-N-acetyl-alpha-D-muramoyl-L-alanyl-D-glutamate + L-lysine + ATP = UDP-N-acetyl-alpha-D-muramoyl-L-alanyl-gamma-D-glutamyl-L-lysine + ADP + phosphate + H(+). It functions in the pathway cell wall biogenesis; peptidoglycan biosynthesis. In terms of biological role, catalyzes the addition of L-lysine to the nucleotide precursor UDP-N-acetylmuramoyl-L-alanyl-D-glutamate (UMAG) in the biosynthesis of bacterial cell-wall peptidoglycan. The sequence is that of UDP-N-acetylmuramoyl-L-alanyl-D-glutamate--L-lysine ligase from Streptococcus pyogenes serotype M3 (strain SSI-1).